A 1009-amino-acid chain; its full sequence is Rho-type GTPase-activating protein 2 (1009 aa).

2 LIM zinc-binding domains span residues 11 to 68 and 69 to 129; these read SLCV…DCSD and KCTN…LLRK. Over residues 143–155 the composition is skewed to basic and acidic residues; sequence KEDFPIKLPERSV. Disordered regions lie at residues 143–228, 358–433, 449–608, 664–709, and 723–780; these read KEDF…RTVS, TKEN…LSRS, TSEM…DATD, TREK…ASPK, and QVGD…DYTP. Residues 162 to 196 are compositionally biased toward polar residues; sequence TRINGKSDVSTNNTAISKNLVSSNEDQQLTPQVLV. Basic and acidic residues predominate over residues 212 to 222; sequence DNSKDREETSS. Composition is skewed to polar residues over residues 363–385 and 399–414; these read KSSQ…ITRT and LRLS…QTAD. The segment covering 481 to 491 has biased composition (basic residues); that stretch reads NIRKSKAKKNP. Polar residues-rich tracts occupy residues 493–510 and 522–553; these read SRGQ…QHGN and QSSL…SSSG. Residues 664–682 show a composition bias toward basic and acidic residues; the sequence is TREKDKQSASSRESLEQKE. 2 stretches are compositionally biased toward polar residues: residues 683 to 707 and 728 to 749; these read NIAT…SNAS and ESQQ…QKEI. Phosphoserine is present on Ser-763. One can recognise a Rho-GAP domain in the interval 788 to 1006; that stretch reads SSLQARCAYE…FILGNYRDIF (219 aa).

In terms of biological role, GTPase-activating protein (GAP) for CDC42 and/or RHO1. This Saccharomyces cerevisiae (strain ATCC 204508 / S288c) (Baker's yeast) protein is Rho-type GTPase-activating protein 2 (RGA2).